The following is a 370-amino-acid chain: Flagellar P-ring protein (370 aa).

The N-terminal stretch at 1–21 is a signal peptide; it reads MKYILIKLSIVMIFIINSASK.

It belongs to the FlgI family. The basal body constitutes a major portion of the flagellar organelle and consists of four rings (L,P,S, and M) mounted on a central rod.

The protein localises to the bacterial flagellum basal body. Assembles around the rod to form the L-ring and probably protects the motor/basal body from shearing forces during rotation. The protein is Flagellar P-ring protein of Wigglesworthia glossinidia brevipalpis.